Reading from the N-terminus, the 280-residue chain is NAD kinase (280 aa).

Catalysis depends on aspartate 67, which acts as the Proton acceptor. NAD(+) is bound by residues 67–68 (DG), arginine 72, 138–139 (ND), aspartate 167, alanine 175, 178–183 (TAYSLS), and glutamine 237.

Belongs to the NAD kinase family. It depends on a divalent metal cation as a cofactor.

It localises to the cytoplasm. The catalysed reaction is NAD(+) + ATP = ADP + NADP(+) + H(+). Its function is as follows. Involved in the regulation of the intracellular balance of NAD and NADP, and is a key enzyme in the biosynthesis of NADP. Catalyzes specifically the phosphorylation on 2'-hydroxyl of the adenosine moiety of NAD to yield NADP. The protein is NAD kinase of Aeropyrum pernix (strain ATCC 700893 / DSM 11879 / JCM 9820 / NBRC 100138 / K1).